Consider the following 1118-residue polypeptide: Phytochrome 1 (1118 aa).

The segment covering 1–10 (MSSTRHSYSS) has biased composition (low complexity). The tract at residues 1–23 (MSSTRHSYSSGGSGKSKHGRRIA) is disordered. A GAF domain is found at 212 to 391 (DIGLLCDSVV…VFSLQLNMEV (180 aa)). Cys-317 is a binding site for phytochromobilin. PAS domains follow at residues 606-677 (VASE…LEGE) and 740-811 (DYKA…TKLM). Residues 887–1110 (YVKEELKKPL…LVTIQFPLAH (224 aa)) form the Histidine kinase domain.

This sequence belongs to the phytochrome family. Homodimer. Contains one covalently linked phytochromobilin chromophore.

In terms of biological role, regulatory photoreceptor which exists in two forms that are reversibly interconvertible by light: the Pr form that absorbs maximally in the red region of the spectrum and the Pfr form that absorbs maximally in the far-red region. Photoconversion of Pr to Pfr induces an array of morphogenic responses, whereas reconversion of Pfr to Pr cancels the induction of those responses. Pfr controls the expression of a number of nuclear genes including those encoding the small subunit of ribulose-bisphosphate carboxylase, chlorophyll A/B binding protein, protochlorophyllide reductase, rRNA, etc. It also controls the expression of its own gene(s) in a negative feedback fashion. This is Phytochrome 1 (PHY1) from Adiantum capillus-veneris (Maidenhair fern).